Here is a 328-residue protein sequence, read N- to C-terminus: Hairy/enhancer-of-split related with YRPW motif-like protein (328 aa).

The tract at residues 1–54 is disordered; the sequence is MKRPREPSGSDSESDGPIDVGREGELSQMARPLSTPSPSQMQARKKRRGIIEKR. Residues 42-111 form a transcriptional repression and interaction with NCOR1 and SIN3A region; that stretch reads QARKKRRGII…GGTGFFDARA (70 aa). The bHLH domain maps to 43 to 98; sequence ARKKRRGIIEKRRRDRINSSLSELRRLVPTAFEKQGSSKLEKAEVLQMTVDHLKML. The Orange domain maps to 116–153; sequence FRSIGFRECLTEVIRYLGVLEGPSSRADPVRIRLLSHL. Residues 236-272 are disordered; sequence LLPSRGASSTRRARPLERPAAPLPAAPSGRATRGSHM.

This sequence belongs to the HEY family. Self-associates. Interacts with GATA4, GATA6, HES1, HEY1 and HEY2. Interacts with HDAC1, NCOR1 and SIN3A.

The protein resides in the nucleus. Functionally, downstream effector of Notch signaling which may be required for cardiovascular development. Transcriptional repressor which binds preferentially to the canonical E box sequence 5'-CACGTG-3'. Represses transcription by the cardiac transcriptional activators GATA4 and GATA6. The polypeptide is Hairy/enhancer-of-split related with YRPW motif-like protein (HEYL) (Bos taurus (Bovine)).